Consider the following 478-residue polypeptide: Multidrug resistance outer membrane protein MdtQ (478 aa).

A signal peptide spans 1–21 (MNRDSFYPAIACFPLLLMLAG). Cysteine 22 carries N-palmitoyl cysteine lipidation. Cysteine 22 carries the S-diacylglycerol cysteine lipid modification.

It belongs to the outer membrane factor (OMF) (TC 1.B.17) family.

Its subcellular location is the cell outer membrane. Could be involved in resistance to puromycin, acriflavine and tetraphenylarsonium chloride. This Escherichia coli O6:H1 (strain CFT073 / ATCC 700928 / UPEC) protein is Multidrug resistance outer membrane protein MdtQ (mdtQ).